Here is an 826-residue protein sequence, read N- to C-terminus: U4/U6 snRNA-associated-splicing factor PRP24 (826 aa).

4 RRM domains span residues 310-385, 386-463, 477-554, and 598-670; these read TSVF…EAAG, ITLY…YSDP, REVH…LSVS, and RSFA…AVPQ.

The protein resides in the nucleus. In terms of biological role, functions as a recycling factor of the spliceosome, a machinery that forms on each precursor-messenger RNA (pre-mRNA) and catalyzes the removal of introns. Chaperones the re-annealing of U4 and U6 snRNAs (small nuclear RNAs) released from previous rounds of splicing, an initial step in reforming the U4/U6-U5 tri-snRNP (small nuclear ribonucleoprotein) that can reassemble into another spliceosome complex; this step involves binding U6 and facilitating the unwinding of the U6 internal stem loop, followed by base-pairing of U6 to U4. The polypeptide is U4/U6 snRNA-associated-splicing factor PRP24 (Ophiostoma ulmi (Dutch elm disease fungus)).